The following is a 1259-amino-acid chain: Translocation and assembly module subunit TamB (1259 aa).

Methionine 1 is modified (N-formylmethionine). The Cytoplasmic segment spans residues 1–6 (MSLWKK). A helical; Signal-anchor for type II membrane protein membrane pass occupies residues 7 to 27 (ISLGVVIVILLLLGSVAFLVG). At 28-1259 (TTSGLHLVFK…ALDLLYQFEF (1232 aa)) the chain is on the periplasmic side.

Belongs to the TamB family. As to quaternary structure, interacts with TamA to form the translocation and assembly module (TAM).

Its subcellular location is the cell inner membrane. Its function is as follows. Component of the translocation and assembly module (TAM), which facilitates the insertion and assembly of specific beta-barrel proteins into the outer membrane. Promotes the assembly and secretion across the outer membrane of a subset of autotransporters, such as Ag43. Involved in the assembly of the outer membrane usher protein FimD. In vitro, when TAM is reconstituted into preformed liposomes, it can promote the assembly of several outer membrane proteins, including OmpA, EspP, Ag43 and FadL. TamA is sufficient to catalyze a low level of outer membrane protein (OMP) assembly, but both TamA and TamB are required for efficient OMP assembly. TamB may regulate TamA activity. It could regulate conformational changes in TamA to drive its function in OMP assembly. It could also act as a chaperone that facilitate the transport of nascent membrane proteins across the periplasm to TamA in the outer membrane. Functionally, in addition, is involved in outer membrane lipid homeostasis. Likely transports phospholipids between the inner membrane and the outer membrane. It would provide a bridge-like structure that protects phospholipids as they travel across the periplasm. One possible explanation for the apparent dual function of TAM is that TamB is a somewhat generic transporter of hydrophobic molecules. TamB, YdbH and YhdP are redundant, but not equivalent, in performing an essential function for growth and maintaining lipid homeostasis in the outer membrane. The transport functions of TamB and YhdP could be differentiated according to the fatty acid saturation state of the phospholipids, with TamB transporting more unsaturated phospholipids and YhdP more saturated phospholipids. Any of these three proteins is sufficient for growth. In Escherichia coli (strain K12), this protein is Translocation and assembly module subunit TamB.